Consider the following 128-residue polypeptide: Secreted RxLR effector protein RXLR-C09 (128 aa).

Residues 1 to 22 (MRFCLVFIRLAAFVILSGGATS) form the signal peptide. Positions 58–75 (RLLRLNDQADISGHDEER) match the RxLR-dEER motif.

This sequence belongs to the RxLR effector family.

It is found in the secreted. Its subcellular location is the host cell membrane. It localises to the host nucleus. Secreted effector that suppresses pattern-triggered immunity (PTI) in plant host. This Plasmopara halstedii (Downy mildew of sunflower) protein is Secreted RxLR effector protein RXLR-C09.